A 146-amino-acid polypeptide reads, in one-letter code: Ecotin-like protein 1 (146 aa).

This sequence belongs to the protease inhibitor I11 (ecotin) family.

In Leishmania major, this protein is Ecotin-like protein 1 (ISP1).